A 145-amino-acid chain; its full sequence is MVLSFILVQNRQGKTRLAKWYAPYSDEEKVKLKGEVHRLVAPRDQKYQSNFVEFKRSTKIVYRRYAGLFFCACVDATDNELAYLEAIHFFVEVLDQFFGNVCELDLVFNFYKVYAILDEVFLAGEIEETSKQVVLTRLEHLDKLE.

Belongs to the adaptor complexes small subunit family. Adaptor protein complex 2 (AP-2) is a heterotetramer composed of two large adaptins (alpha-type subunit apl3 and beta-type subunit apl1), a medium chain (mu-type subunit apm4) and a small adaptin (sigma-type subunit aps2).

It localises to the cell membrane. Its subcellular location is the membrane. The protein localises to the coated pit. Functionally, component of the adaptor complexes which link clathrin to receptors in coated vesicles. Clathrin-associated protein complexes are believed to interact with the cytoplasmic tails of membrane proteins, leading to their selection and concentration. This chain is AP-2 complex subunit sigma (aps2), found in Emericella nidulans (strain FGSC A4 / ATCC 38163 / CBS 112.46 / NRRL 194 / M139) (Aspergillus nidulans).